The chain runs to 216 residues: UPF0502 protein Spea_2482 (216 aa).

This sequence belongs to the UPF0502 family.

The protein is UPF0502 protein Spea_2482 of Shewanella pealeana (strain ATCC 700345 / ANG-SQ1).